The following is a 372-amino-acid chain: GTP cyclohydrolase 1 type 2 homolog (372 aa).

Residues H67, H68, D106, H332, and E335 each coordinate a divalent metal cation.

Belongs to the GTP cyclohydrolase I type 2/NIF3 family. Homohexamer.

This Halalkalibacterium halodurans (strain ATCC BAA-125 / DSM 18197 / FERM 7344 / JCM 9153 / C-125) (Bacillus halodurans) protein is GTP cyclohydrolase 1 type 2 homolog.